We begin with the raw amino-acid sequence, 30 residues long: Cyclotide cter-F (30 aa).

Positions 1–30 (GIPCGESCVFIPCISSVVGCSCKSKVCYLD) form a cross-link, cyclopeptide (Gly-Asp). 3 disulfide bridges follow: C4-C20, C8-C22, and C13-C27.

Post-translationally, contains 3 disulfide bonds. In terms of processing, this is a cyclic peptide.

Functionally, probably participates in a plant defense mechanism. The protein is Cyclotide cter-F of Clitoria ternatea (Butterfly pea).